The primary structure comprises 471 residues: Cytolysin (471 aa).

The N-terminal stretch at 1-20 is a signal peptide; sequence MKKMTLFTLSLLATAVQVGA. In terms of domain architecture, Ricin B-type lectin spans 338-465; sequence AHVTLQSLSN…EANQARWKPT (128 aa).

It belongs to the HlyA hemolysin family.

Bacterial hemolysins are exotoxins that attack blood cell membranes and cause cell rupture by mechanisms not clearly defined. In Vibrio vulnificus (strain CMCP6), this protein is Cytolysin (vvhA).